The chain runs to 453 residues: uncharacterized protein (453 aa).

Topologically, residues 1–110 are cytoplasmic; the sequence is MIQTQSTAIK…KAILRTFNHP (110 aa). The helical transmembrane segment at 111–131 threads the bilayer; that stretch reads IALTELQFLVSAVLCVGFASI. The Lumenal portion of the chain corresponds to 132–172; sequence VNLFRLPRLKHTKFSKALNSFPDGILPEYLDGNFRSSILHK. The chain crosses the membrane as a helical span at residues 173–193; sequence FLVPSKLVLMTTFPMGIFQFI. Residues 194 to 201 are Cytoplasmic-facing; sequence GHITSHKA. Residues 202–222 form a helical membrane-spanning segment; sequence VSMIPVSLVHSVKALSPIITV. Over 223 to 234 the chain is Lumenal; it reads GYYKFFEHRYYN. The chain crosses the membrane as a helical span at residues 235–255; it reads SMTYYTLLLLIFGVMTTCWST. The Cytoplasmic portion of the chain corresponds to 256–269; the sequence is HGSKRASDNKSGSS. Residues 270-290 traverse the membrane as a helical segment; it reads LIGLLFAFISMIIFVAQNIFA. Residues 291 to 332 are Lumenal-facing; it reads KNILTIRRKVGILPSSSTDDVTSKEGQPSLDKTRFSPLQVDK. Residues 333–353 form a helical membrane-spanning segment; sequence ITILFYCSCIGFSLTLLPFLT. The Cytoplasmic portion of the chain corresponds to 354–371; the sequence is GELMHGGSVINDLTLETV. A helical transmembrane segment spans residues 372-392; the sequence is ALVAIHGIAHFFQAMLAFQLI. Residues 393 to 413 are Lumenal-facing; that stretch reads GLLSSINYSVANIMKRIVVIS. The helical transmembrane segment at 414–434 threads the bilayer; the sequence is VALFWETKLNFFQVFGVILTI. Residues 435–453 are Cytoplasmic-facing; the sequence is AGLYGYDKWGLSKKDGRQA.

It belongs to the TPT transporter family.

The protein resides in the membrane. Functionally, able to suppress the functional loss of YPT1. May form a channel. Protein SLY41 is not essential for cell viability. The SLY41 gene is a multicopy suppressor. This is an uncharacterized protein from Saccharomyces cerevisiae (strain ATCC 204508 / S288c) (Baker's yeast).